The sequence spans 656 residues: Pumilio homology domain family member 6 (656 aa).

A disordered region spans residues 1–107 (MAPLTKKTNG…GGENGNHTEQ (107 aa)). Residues 13–23 (SAKEVSHSEKK) show a composition bias toward basic and acidic residues. Phosphoserine; by CK2 is present on residues serine 31, serine 34, and serine 35. A phosphoserine mark is found at serine 34 and serine 35. Acidic residues predominate over residues 52 to 89 (SDDDDLDDLSTSDSEAEEEADELDISDDSEEHENENEE). The span at 90-107 (KEGKDKSEGGENGNHTEQ) shows a compositional bias: basic and acidic residues. In terms of domain architecture, PUM-HD spans 133 to 483 (RLRVKTPPLP…ELLSKFAPMF (351 aa)). Pumilio repeat units lie at residues 155–191 (ELSKDCISDLVLKHDASRIVQTLVKYSSKDRREQIVD), 192–227 (ALKGKFYVLATSAYGKYLLVKLLHYGSRSSRQTIIN), 228–264 (ELHGSLRKLMRHREGAYVVEDLFVLYATHEQRQQMIK), 340–376 (ELLHEQFAELVHTPEGSDVACTLVARANAKERKLILK), 377–413 (ALKNHAEKLIKNEYGNIVFITILNCVDDTVLVFKTFS), and 415–450 (TVKEHLQEFIIDKFGRRPWLYILLGLDGKYFSPIVK).

It belongs to the PUF6 family. Component of the ASH1 mRNP composed of at least PUF6, SHE2, SHE3, SHE1 and the ASH1 mRNA. Interacts with SHE2 and FUN12. In terms of processing, phosphorylation by CK2 relieves translational repression activity.

It localises to the bud tip. Its subcellular location is the nucleus. The protein localises to the nucleolus. Functionally, RNA-binding protein involved in post-transcriptional regulation. Component of the ASH1 mRNP which transports the ASH1 mRNA to the distal tip of the bud, where the ASH1 protein is translated and targeted to the daughter cell nucleus. Binds to the ASH1 3'-UTR containing the PUF consensus UUGU segment and represses its translation. This silencing of ASH1 mRNA is critical for asymmetric seggregation of ASH1 to the daughter cell nucleus. The polypeptide is Pumilio homology domain family member 6 (PUF6) (Saccharomyces cerevisiae (strain ATCC 204508 / S288c) (Baker's yeast)).